A 610-amino-acid chain; its full sequence is MIQVLLVTICLAAFPYQGSSIILESGDVNDYEVVYPRKVTALPKGAVQQKYEDAMQYEFKVNGEPVVLHLEKNKHLFSKDYSETHYSPDGREITINPPVEDHCYYHGRIENDGDSTASISACNGLKGNFKLQGETYLIEPMKLSDSEAHAVFKYENVEKEDEAPKMCGVTQKWKSYEPIKKISQLNLIPEQQIYDPFKYVETVVVVDKAMVTKYNGDLDKIKTKMYEAANNMNEMYRYMFFRVVMVGLIIWTEEDKITVKPDVDYTLNAFAEWRKTYLLAEKKHDNAQLITGIDFRGSIIGYAYIGSMCHPKRSVGIIQDYSPINLVLAVIMAHEMGHNLGIHHDDGYCYCGGYPCIMGPSISPEPSKFFSNCSYIQCWDFIMNHNPECIDNEPLGTDIISPPLCGNELLEVGEECDCGTPENCQNECCDAATCKLKSGSQCGHGDCCEQCKFRTSGTECRASMSECDPAEHCTGQSSECPADVFHKNGEPCLDNYGYCYNGNCPIMYHQCYALFGADIYEAEDSCFESNKKGNYYGYCRKENGKKIPCASEDVKCGRLYCKDDSPGQNNPCKMFYSNDDEHKGMVLPGTKCADGKVCSNGHCVDVTTAY.

A signal peptide spans 1 to 20 (MIQVLLVTICLAAFPYQGSS). Residues 21-191 (IILESGDVND…ISQLNLIPEQ (171 aa)) constitute a propeptide that is removed on maturation. Gln192 is subject to Pyrrolidone carboxylic acid. The Peptidase M12B domain occupies 198–394 (KYVETVVVVD…HNPECIDNEP (197 aa)). Glu201 and Asp285 together coordinate Ca(2+). Intrachain disulfides connect Cys309–Cys389, Cys349–Cys373, and Cys351–Cys356. His334 is a Zn(2+) binding site. Glu335 is a catalytic residue. His338 and His344 together coordinate Zn(2+). Residue Asn372 is glycosylated (N-linked (GlcNAc...) asparagine). Residues Cys389, Asn392, Asn407, Leu409, Glu411, Glu414, and Asp417 each coordinate Ca(2+). The Disintegrin domain occupies 402–488 (PPLCGNELLE…ECPADVFHKN (87 aa)). Cystine bridges form between Cys405–Cys434, Cys416–Cys429, Cys418–Cys424, Cys428–Cys451, Cys442–Cys448, Cys447–Cys473, Cys460–Cys480, Cys467–Cys499, Cys492–Cys504, Cys511–Cys561, Cys526–Cys572, Cys539–Cys549, Cys556–Cys598, and Cys592–Cys603. The short motif at 466-468 (ECD) is the D/ECD-tripeptide element. 5 residues coordinate Ca(2+): Asp468, Pro469, Glu471, Asp483, and Val484.

Belongs to the venom metalloproteinase (M12B) family. P-III subfamily. P-IIIa sub-subfamily. Monomer. The cofactor is Zn(2+). N-glycosylated. Expressed by the venom gland.

It localises to the secreted. The proteinase activity is slightly enhanced by Ca(2+) and Mg(2+), but is completely inhibited by Zn(2+). Is completely inhibited by phenanthroline and EDTA. Not inhibited by PMSF. Snake venom zinc metalloprotease that causes hemorrhage and dose-dependently inhibits platelet aggregation triggered by collagen. This inhibition is due to its binding to glycoprotein VI (GP6) and collagen. The binding to GP6 results in inhibition of the signaling pathway (decrease of tyrosine phosphorylation of signaling proteins such as Syk, LAT, PI3-K and PLCgamma2). Preferentially cleaves alpha chain (FGA) of fibrinogen, followed by beta chain (FGB). Also degrades the extracellular matrix protein fibronectin (FN1), and cleaves collagen and von Willebrand factor (VWF). The polypeptide is Zinc metalloproteinase-disintegrin-like acurhagin (Deinagkistrodon acutus (Hundred-pace snake)).